The primary structure comprises 147 residues: Large ribosomal subunit protein uL23A (147 aa).

The segment covering 1 to 10 has biased composition (low complexity); it reads MAPSAPAKTA. The segment at 1-29 is disordered; the sequence is MAPSAPAKTAKALDAKKKVVKGKRTTHRR. Residues 18-29 show a composition bias toward basic residues; the sequence is KVVKGKRTTHRR.

This sequence belongs to the universal ribosomal protein uL23 family.

Functionally, this protein binds to a specific region on the 26S rRNA. The sequence is that of Large ribosomal subunit protein uL23A from Caenorhabditis elegans.